Consider the following 91-residue polypeptide: PqqA binding protein 1 (91 aa).

It belongs to the PqqD family. In terms of assembly, monomer. Interacts with PqqE.

Its pathway is cofactor biosynthesis; pyrroloquinoline quinone biosynthesis. Its function is as follows. Functions as a PqqA binding protein and presents PqqA to PqqE, in the pyrroloquinoline quinone (PQQ) biosynthetic pathway. The protein is PqqA binding protein 1 (pqqD1) of Pseudomonas putida (strain ATCC 47054 / DSM 6125 / CFBP 8728 / NCIMB 11950 / KT2440).